The following is a 591-amino-acid chain: Protein kinase C zeta type (591 aa).

One can recognise a PB1 domain in the interval 15–98; it reads RVRLKAHYSG…DGLILHVFPS (84 aa). The interaction with SQSTM1 stretch occupies residues 79–145; the sequence is AFRLAGQHRD…KRFNRRAYCG (67 aa). The segment at 130–180 adopts a Phorbol-ester/DAG-type zinc-finger fold; sequence GHLFQAKRFNRRAYCGQCSERIWGLARQGYRCINCKLLVHKRCHGLVPLTC. A Protein kinase domain is found at 251 to 517; the sequence is FDLIRVIGRG…FSDIKSHAFF (267 aa). ATP is bound by residues 257–265 and K280; that span reads IGRGSYAKV. The Proton acceptor role is filled by D375. Phosphothreonine; by PDPK1 and PI3K is present on T409. Residues 518 to 589 form the AGC-kinase C-terminal domain; the sequence is RSIDWDLLEK…INPLLLSTEE (72 aa). T559 carries the phosphothreonine modification. Position 590 is a phosphoserine (S590).

This sequence belongs to the protein kinase superfamily. AGC Ser/Thr protein kinase family. PKC subfamily. As to quaternary structure, interacts with PARD6A, PARD6B and PARD6G. Part of a complex with PARD3, PARD6A or PARD6B or PARD6G and CDC42 or RAC1. Interacts with ADAP1/CENTA1. Interacts directly with SQSTM1. Forms a ternary complex with SQSTM1 and KCNAB2. Forms another ternary complex with SQSTM1 and GABRR3. Forms a complex with SQSTM1 and MAP2K5. Interacts (via the protein kinase domain) with WWC1. Forms a tripartite complex with WWC1 and DDR1, but predominantly in the absence of collagen. Component of the Par polarity complex, composed of at least phosphorylated PRKCZ, PARD3 and TIAM1. Interacts with PDPK1 (via N-terminal region). Interacts with WDFY2 (via WD repeats 1-3). Interacts with VAMP2. Forms a complex with WDFY2 and VAMP2. Interacts with APPL1. Interacts with WWC1, WWC2 and WWC3. In terms of processing, CDH5 is required for its phosphorylation at Thr-409. Phosphorylated by protein kinase PDPK1; phosphorylation is inhibited by the apoptotic C-terminal cleavage product of PKN2. Phosphorylation at Thr-409 by PI3K activates the kinase.

It localises to the cytoplasm. The protein resides in the endosome. The protein localises to the cell junction. Its subcellular location is the membrane. The enzyme catalyses L-seryl-[protein] + ATP = O-phospho-L-seryl-[protein] + ADP + H(+). The catalysed reaction is L-threonyl-[protein] + ATP = O-phospho-L-threonyl-[protein] + ADP + H(+). With respect to regulation, atypical PKCs (PRKCI and PRKCZ) exhibit an elevated basal enzymatic activity (that may be due to the interaction with SMG1 or SQSTM1) and are not regulated by diacylglycerol, phosphatidylserine, phorbol esters or calcium ions. Two specific sites, Thr-409 (activation loop of the kinase domain) and Thr-559 (turn motif), need to be phosphorylated for its full activation. Phosphatidylinositol 3,4,5-trisphosphate might be a physiological activator. Functionally, calcium- and diacylglycerol-independent serine/threonine-protein kinase that functions in phosphatidylinositol 3-kinase (PI3K) pathway and mitogen-activated protein (MAP) kinase cascade, and is involved in NF-kappa-B activation, mitogenic signaling, cell proliferation, cell polarity, inflammatory response and maintenance of long-term potentiation (LTP). Upon lipopolysaccharide (LPS) treatment in macrophages, or following mitogenic stimuli, functions downstream of PI3K to activate MAP2K1/MEK1-MAPK1/ERK2 signaling cascade independently of RAF1 activation. Required for insulin-dependent activation of AKT3, but may function as an adapter rather than a direct activator. Upon insulin treatment may act as a downstream effector of PI3K and contribute to the activation of translocation of the glucose transporter SLC2A4/GLUT4 and subsequent glucose transport in adipocytes. In EGF-induced cells, binds and activates MAP2K5/MEK5-MAPK7/ERK5 independently of its kinase activity and can activate JUN promoter through MEF2C. Through binding with SQSTM1/p62, functions in interleukin-1 signaling and activation of NF-kappa-B with the specific adapters RIPK1 and TRAF6. Participates in TNF-dependent transactivation of NF-kappa-B by phosphorylating and activating IKBKB kinase, which in turn leads to the degradation of NF-kappa-B inhibitors. In migrating astrocytes, forms a cytoplasmic complex with PARD6A and is recruited by CDC42 to function in the establishment of cell polarity along with the microtubule motor and dynein. In association with FEZ1, stimulates neuronal differentiation in PC12 cells. In the inflammatory response, is required for the T-helper 2 (Th2) differentiation process, including interleukin production, efficient activation of JAK1 and the subsequent phosphorylation and nuclear translocation of STAT6. May be involved in development of allergic airway inflammation (asthma), a process dependent on Th2 immune response. In the NF-kappa-B-mediated inflammatory response, can relieve SETD6-dependent repression of NF-kappa-B target genes by phosphorylating the RELA subunit at 'Ser-311'. Phosphorylates VAMP2 in vitro. Phosphorylates and activates LRRK1, which phosphorylates RAB proteins involved in intracellular trafficking. The chain is Protein kinase C zeta type (PRKCZ) from Oryctolagus cuniculus (Rabbit).